A 205-amino-acid polypeptide reads, in one-letter code: Guanylate kinase (205 aa).

Residues Gly-7–Asn-185 enclose the Guanylate kinase-like domain. An ATP-binding site is contributed by Ala-14–Thr-21.

The protein belongs to the guanylate kinase family.

Its subcellular location is the cytoplasm. The catalysed reaction is GMP + ATP = GDP + ADP. In terms of biological role, essential for recycling GMP and indirectly, cGMP. The sequence is that of Guanylate kinase (gmk) from Neisseria meningitidis serogroup B (strain ATCC BAA-335 / MC58).